A 493-amino-acid chain; its full sequence is Voltage-gated potassium channel regulatory subunit KCNF1 (493 aa).

Over 1–183 (MDASAEQSLP…KPESSCPARV (183 aa)) the chain is Cytoplasmic. Residues 184–204 (VAVLSFLLILVSSVVMCMGTI) form a helical membrane-spanning segment. Residues 224–244 (NVETACIGWFTLEYLLRLFSS) traverse the membrane as a helical segment. Residues 245–249 (PNKLH) are Cytoplasmic-facing. A helical transmembrane segment spans residues 250 to 270 (FALSFMNIVDVLAILPFYVSL). A helical; Voltage-sensor transmembrane segment spans residues 290–310 (QALRIMRIARIFKLARHSSGL). The Cytoplasmic segment spans residues 311–324 (QTLTYALKRSFKEL). The helical transmembrane segment at 325–345 (GLLLMYLAVGIFVFSALGYTM) threads the bilayer. The pore-forming intramembrane region spans 358–378 (PQSFWWAIITMTTVGYGDIYP). Positions 370-375 (TVGYGD) match the Selectivity filter motif. A helical transmembrane segment spans residues 386-406 (NAAISFLCGVIAIALPIHPII). The Cytoplasmic portion of the chain corresponds to 407–493 (NNFVRYYNKQ…HHRTRLQSCK (87 aa)). Residues 434-468 (SSSAEGKPGGSRSDLDTLPPEPAAREGPSWGSRLK) are disordered.

The protein belongs to the potassium channel family. F (TC 1.A.1.2) subfamily. Kv5.1/KCNF1 sub-subfamily. Heterotetramer with KCNB1 or KCNB2.

The protein resides in the cell membrane. Regulatory alpha-subunit of the voltage-gated potassium (Kv) channel which, when coassembled with KCNB1 or KCNB2, can modulate their expression and their gating kinetics by acting on deactivation upon repolarization and inactivation during maintained depolarization. Accelerates inactivation but has relatively little effect on deactivation. Coexpression with KCNB1 or KCNB2 markedly slows inactivation. Each modulatory subunit has its own specific properties of regulation, and can lead to extensive inhibitions, to large changes in kinetics, and/or to large shifts in the voltage dependencies of the inactivation process. The gating kinetics depends on the nature and stoichiometry of the associated regulatory sunbunit. Fails to produce a potassium current when expressed alone. In Mus musculus (Mouse), this protein is Voltage-gated potassium channel regulatory subunit KCNF1.